Here is a 222-residue protein sequence, read N- to C-terminus: Ras-related protein Rab11C (222 aa).

22–29 contacts GTP; sequence GDSAVGKT. The Effector region motif lies at 44–52; it reads SKATIGVEF. Residues 70 to 74 and 128 to 131 each bind GTP; these read DTAGQ and NKTD. Residues cysteine 219 and cysteine 220 are each lipidated (S-geranylgeranyl cysteine).

This sequence belongs to the small GTPase superfamily. Rab family.

It is found in the cell membrane. The sequence is that of Ras-related protein Rab11C (RAB11C) from Nicotiana tabacum (Common tobacco).